A 64-amino-acid polypeptide reads, in one-letter code: Small ribosomal subunit protein bS18c (64 aa).

Belongs to the bacterial ribosomal protein bS18 family. Part of the 30S ribosomal subunit.

The protein resides in the plastid. The protein localises to the chloroplast. In Bigelowiella natans (Pedinomonas minutissima), this protein is Small ribosomal subunit protein bS18c (rps18).